We begin with the raw amino-acid sequence, 168 residues long: Nicotinamide-nucleotide adenylyltransferase (168 aa).

It belongs to the archaeal NMN adenylyltransferase family.

The protein localises to the cytoplasm. The enzyme catalyses beta-nicotinamide D-ribonucleotide + ATP + H(+) = diphosphate + NAD(+). It functions in the pathway cofactor biosynthesis; NAD(+) biosynthesis; NAD(+) from nicotinamide D-ribonucleotide: step 1/1. The polypeptide is Nicotinamide-nucleotide adenylyltransferase (Methanocorpusculum labreanum (strain ATCC 43576 / DSM 4855 / Z)).